The chain runs to 349 residues: DNA polymerase IV (349 aa).

The UmuC domain occupies 4–185 (IIHIDCDCFY…LPVAKLHGVG (182 aa)). Mg(2+)-binding residues include aspartate 8 and aspartate 103. Glutamate 104 is an active-site residue.

The protein belongs to the DNA polymerase type-Y family. As to quaternary structure, monomer. Requires Mg(2+) as cofactor.

The protein localises to the cytoplasm. The enzyme catalyses DNA(n) + a 2'-deoxyribonucleoside 5'-triphosphate = DNA(n+1) + diphosphate. Functionally, poorly processive, error-prone DNA polymerase involved in untargeted mutagenesis. Copies undamaged DNA at stalled replication forks, which arise in vivo from mismatched or misaligned primer ends. These misaligned primers can be extended by PolIV. Exhibits no 3'-5' exonuclease (proofreading) activity. May be involved in translesional synthesis, in conjunction with the beta clamp from PolIII. The polypeptide is DNA polymerase IV (Pseudomonas aeruginosa (strain UCBPP-PA14)).